A 217-amino-acid chain; its full sequence is Kunitz-type trypsin inhibitor-like 2 protein (217 aa).

Residues M1–N26 form the signal peptide. Cystine bridges form between C70–C115 and C168–C175. N191 carries an N-linked (GlcNAc...) asparagine glycan.

This sequence belongs to the protease inhibitor I3 (leguminous Kunitz-type inhibitor) family.

It is found in the secreted. Might act as a protease inhibitor involved in plant defense responses. The chain is Kunitz-type trypsin inhibitor-like 2 protein (PIP20-2) from Pisum sativum (Garden pea).